A 147-amino-acid polypeptide reads, in one-letter code: Response regulator Rcp1 (147 aa).

The Response regulatory domain maps to 10–135 (VILLVEDSKA…DLFKMVQGIE (126 aa)). 4-aspartylphosphate is present on Asp-68.

In terms of processing, phosphorylated by Cph1.

Its function is as follows. Forms a two-component system with Cph1 in which it acts as receiver substrate. This is Response regulator Rcp1 (rcp1) from Synechocystis sp. (strain ATCC 27184 / PCC 6803 / Kazusa).